Reading from the N-terminus, the 574-residue chain is Eukaryotic translation initiation factor 3 subunit D (574 aa).

The interval 153–178 (QRRGGNARQGQRGQGGRFGGDRPKER) is disordered. Over residues 154–163 (RRGGNARQGQ) the composition is skewed to low complexity. An RNA gate region spans residues 312-326 (PVETLTVSETSAEPP). Positions 555–574 (EGTFDSERESSEEENSDDDQ) are disordered. A compositionally biased stretch (acidic residues) spans 564–574 (SSEEENSDDDQ).

It belongs to the eIF-3 subunit D family. As to quaternary structure, component of the eukaryotic translation initiation factor 3 (eIF-3) complex.

The protein localises to the cytoplasm. In terms of biological role, mRNA cap-binding component of the eukaryotic translation initiation factor 3 (eIF-3) complex, which is involved in protein synthesis of a specialized repertoire of mRNAs and, together with other initiation factors, stimulates binding of mRNA and methionyl-tRNAi to the 40S ribosome. The eIF-3 complex specifically targets and initiates translation of a subset of mRNAs involved in cell proliferation. In the eIF-3 complex, eif3d specifically recognizes and binds the 7-methylguanosine cap of a subset of mRNAs. This Caenorhabditis briggsae protein is Eukaryotic translation initiation factor 3 subunit D.